Reading from the N-terminus, the 176-residue chain is Oligoribonuclease (176 aa).

Positions 2-159 constitute an Exonuclease domain; the sequence is EMTGLNPETD…DDILESIEEM (158 aa). Residue Y117 is part of the active site.

The protein belongs to the oligoribonuclease family.

Its subcellular location is the cytoplasm. 3'-to-5' exoribonuclease specific for small oligoribonucleotides. The sequence is that of Oligoribonuclease from Neisseria gonorrhoeae (strain ATCC 700825 / FA 1090).